We begin with the raw amino-acid sequence, 355 residues long: tRNA pseudouridine synthase D (355 aa).

Aspartate 84 (nucleophile) is an active-site residue. One can recognise a TRUD domain in the interval 160–306; that stretch reads GVPNYFGLQR…MAHERRILRL (147 aa).

This sequence belongs to the pseudouridine synthase TruD family.

The enzyme catalyses uridine(13) in tRNA = pseudouridine(13) in tRNA. In terms of biological role, responsible for synthesis of pseudouridine from uracil-13 in transfer RNAs. This is tRNA pseudouridine synthase D from Pseudomonas aeruginosa (strain ATCC 15692 / DSM 22644 / CIP 104116 / JCM 14847 / LMG 12228 / 1C / PRS 101 / PAO1).